A 737-amino-acid chain; its full sequence is Catalase-peroxidase (737 aa).

The tract at residues 1–33 (MPEATEHPPIGEAQTEPAQSGCPMVIKPPVEGG) is disordered. The segment at residues 107-235 (WHAAGTYRVQ…LGASHMGLIY (129 aa)) is a cross-link (tryptophyl-tyrosyl-methioninium (Trp-Tyr) (with M-261)). H108 functions as the Proton acceptor in the catalytic mechanism. A cross-link (tryptophyl-tyrosyl-methioninium (Tyr-Met) (with W-107)) is located at residues 235–261 (YVNPEGPEGNPDPIAAAIDIRETFGRM). H276 is a binding site for heme.

The protein belongs to the peroxidase family. Peroxidase/catalase subfamily. Homodimer or homotetramer. It depends on heme b as a cofactor. Post-translationally, formation of the three residue Trp-Tyr-Met cross-link is important for the catalase, but not the peroxidase activity of the enzyme.

The catalysed reaction is H2O2 + AH2 = A + 2 H2O. The enzyme catalyses 2 H2O2 = O2 + 2 H2O. In terms of biological role, bifunctional enzyme with both catalase and broad-spectrum peroxidase activity. May play a role in polycyclic aromatic hydrocarbon (PAH) metabolism. The chain is Catalase-peroxidase from Mycolicibacterium vanbaalenii (Mycobacterium vanbaalenii).